Consider the following 235-residue polypeptide: Post-translational flagellin modification protein B (235 aa).

The protein belongs to the CMP-NeuNAc synthase family.

In terms of biological role, required for biosynthesis of LAH modification in the post-translational modification of Campylobacter coli flagellin. The sequence is that of Post-translational flagellin modification protein B (ptmB) from Campylobacter coli.